A 299-amino-acid chain; its full sequence is MSTLELCEKYFGTRDVYKLMELARGAGEKEVKKAYHKLSLLVHPDRVPEEQKAESTEKFKVLSKLYQVLTDTQKRALYDEQGVIDDDDESESKLSSWLELWSKIFKPITEEDINNYEKEYVESELERTDLKKAYLGGKGCINYLMNHVPFMKVEDEPRIQKIVQDMIASGEVPEYKIFTEEPAAKRKKRHQKYAREFKEAKVIKERLKRRQKEKDDQDLADNGGDLQQMILARRNQRESNFGSLMDRLMEKYGNEDDSDTVDFSAFEKKKKKSKKPAAKQETKPKLNGVKAGRVEKGKN.

Residues 15–82 (DVYKLMELAR…QKRALYDEQG (68 aa)) form the J domain. Phosphoserine is present on S239. The interval 266–299 (FEKKKKKSKKPAAKQETKPKLNGVKAGRVEKGKN) is disordered. The segment covering 268-277 (KKKKKSKKPA) has biased composition (basic residues).

This chain is J domain-containing protein CG6693, found in Drosophila melanogaster (Fruit fly).